The chain runs to 292 residues: NAD kinase (292 aa).

Aspartate 73 acts as the Proton acceptor in catalysis. NAD(+) is bound by residues 73-74 (DG), 147-148 (NE), histidine 158, arginine 175, aspartate 177, 188-193 (TAYSLS), and glutamine 247.

The protein belongs to the NAD kinase family. It depends on a divalent metal cation as a cofactor.

It is found in the cytoplasm. It carries out the reaction NAD(+) + ATP = ADP + NADP(+) + H(+). Its function is as follows. Involved in the regulation of the intracellular balance of NAD and NADP, and is a key enzyme in the biosynthesis of NADP. Catalyzes specifically the phosphorylation on 2'-hydroxyl of the adenosine moiety of NAD to yield NADP. The protein is NAD kinase of Photorhabdus laumondii subsp. laumondii (strain DSM 15139 / CIP 105565 / TT01) (Photorhabdus luminescens subsp. laumondii).